A 133-amino-acid chain; its full sequence is Small ribosomal subunit protein uS11 (133 aa).

It belongs to the universal ribosomal protein uS11 family. In terms of assembly, part of the 30S ribosomal subunit. Interacts with proteins S7 and S18. Binds to IF-3.

In terms of biological role, located on the platform of the 30S subunit, it bridges several disparate RNA helices of the 16S rRNA. Forms part of the Shine-Dalgarno cleft in the 70S ribosome. This chain is Small ribosomal subunit protein uS11, found in Cupriavidus metallidurans (strain ATCC 43123 / DSM 2839 / NBRC 102507 / CH34) (Ralstonia metallidurans).